The primary structure comprises 362 residues: Chorismate synthase (362 aa).

Position 47 (Arg47) interacts with NADP(+). FMN contacts are provided by residues 124 to 126 (RSS), Gly286, 301 to 305 (KPTAT), and Arg327.

It belongs to the chorismate synthase family. Homotetramer. It depends on FMNH2 as a cofactor.

It carries out the reaction 5-O-(1-carboxyvinyl)-3-phosphoshikimate = chorismate + phosphate. Its pathway is metabolic intermediate biosynthesis; chorismate biosynthesis; chorismate from D-erythrose 4-phosphate and phosphoenolpyruvate: step 7/7. Functionally, catalyzes the anti-1,4-elimination of the C-3 phosphate and the C-6 proR hydrogen from 5-enolpyruvylshikimate-3-phosphate (EPSP) to yield chorismate, which is the branch point compound that serves as the starting substrate for the three terminal pathways of aromatic amino acid biosynthesis. This reaction introduces a second double bond into the aromatic ring system. This chain is Chorismate synthase, found in Rippkaea orientalis (strain PCC 8801 / RF-1) (Cyanothece sp. (strain PCC 8801)).